The sequence spans 1007 residues: Kinesin-like protein KIN-14F (1007 aa).

The Calponin-homology (CH) domain occupies 41–187; the sequence is AARRNEAAGW…CVLALKSYGD (147 aa). The Kinesin motor domain occupies 390–715; sequence SIRVYCRVRP…LKFAERVSTV (326 aa). An ATP-binding site is contributed by 472–479; sequence GQTGSGKT. A coiled-coil region spans residues 718-748; the sequence is GAARLNKESGEVKELKEQIARLKSSLAMKDS. Residues 885–904 are compositionally biased toward basic and acidic residues; sequence KQYLRNNSRKKDGNEFEQQR. 2 disordered regions span residues 885–924 and 944–1007; these read KQYL…ATSD and SENG…AGTK. A compositionally biased stretch (polar residues) spans 963–1001; that stretch reads TRTPLHSQIPSASRKTSNGNRSGRQPLSGSDSRRLSSNG.

The protein belongs to the TRAFAC class myosin-kinesin ATPase superfamily. Kinesin family. KIN-14 subfamily.

This is Kinesin-like protein KIN-14F from Oryza sativa subsp. japonica (Rice).